Reading from the N-terminus, the 57-residue chain is uncharacterized protein (57 aa).

The chain crosses the membrane as a helical span at residues 21–37; that stretch reads GTYTLVVAFVLAFLVYS.

The protein localises to the host membrane. This is an uncharacterized protein from Human herpesvirus 6B (strain Z29) (HHV-6 variant B).